A 264-amino-acid chain; its full sequence is Meiotic recombination protein REC102 (264 aa).

Belongs to the TOP6B-like family. In terms of assembly, interacts with REC104; seems to form a functional unit with REC104. REC102-REC104 interacts with SKI8-SPO11 and this interaction is required for proper subcellular location of the proteins during the initiation of recombination. Interacts with MEI4, REC114 and SPO11.

It localises to the nucleus. Functionally, required for formation of the SPO11-mediated double-strand breaks (DSBs) that initiate meiotic recombination. May mediate the interaction between SPO11 subunits during meiosis. Also needed for homolog chromosome pairing, synaptonemal complex formation, and for the proper timing of the first meiotic division. Not required for mitosis and mitotic DNA repair mechanisms. The protein is Meiotic recombination protein REC102 of Saccharomyces cerevisiae (strain ATCC 204508 / S288c) (Baker's yeast).